Consider the following 337-residue polypeptide: Biotin synthase 1 (337 aa).

Residues M1–H23 form a disordered region. The region spanning T57–R284 is the Radical SAM core domain. Residues C72, C76, and C79 each contribute to the [4Fe-4S] cluster site. Residues C116, C147, C207, and R279 each coordinate [2Fe-2S] cluster.

This sequence belongs to the radical SAM superfamily. Biotin synthase family. Homodimer. The cofactor is [4Fe-4S] cluster. It depends on [2Fe-2S] cluster as a cofactor.

The enzyme catalyses (4R,5S)-dethiobiotin + (sulfur carrier)-SH + 2 reduced [2Fe-2S]-[ferredoxin] + 2 S-adenosyl-L-methionine = (sulfur carrier)-H + biotin + 2 5'-deoxyadenosine + 2 L-methionine + 2 oxidized [2Fe-2S]-[ferredoxin]. Its pathway is cofactor biosynthesis; biotin biosynthesis; biotin from 7,8-diaminononanoate: step 2/2. Functionally, catalyzes the conversion of dethiobiotin (DTB) to biotin by the insertion of a sulfur atom into dethiobiotin via a radical-based mechanism. This is Biotin synthase 1 from Polaromonas sp. (strain JS666 / ATCC BAA-500).